We begin with the raw amino-acid sequence, 461 residues long: Integrator complex subunit 12 (461 aa).

The tract at residues 42–131 (GIDSSYRPTQ…PETRSSPITV (90 aa)) is disordered. Lysine 68 participates in a covalent cross-link: Glycyl lysine isopeptide (Lys-Gly) (interchain with G-Cter in SUMO2). A compositionally biased stretch (basic and acidic residues) spans 88–124 (TAEKIKKEAEKRPADKMKDVTEGIDVPKKPRLEKPET). Serine 127 is subject to Phosphoserine. A PHD-type zinc finger spans residues 158-214 (GLACVVCRQMTVASGNQLVECQECHNLYHQDCHKPQVTDKEVNDPRLVWYCARCTRQ). Residue lysine 253 forms a Glycyl lysine isopeptide (Lys-Gly) (interchain with G-Cter in SUMO2) linkage. Positions 302–328 (AGPSTAKLNSAAQNSSGKPAASSSNQK) are enriched in polar residues. Residues 302–443 (AGPSTAKLNS…PTSQESQLNA (142 aa)) are disordered. 2 stretches are compositionally biased toward low complexity: residues 348 to 357 (GSGNSTSPSV) and 381 to 436 (VSKV…GPTS).

It belongs to the Integrator subunit 12 family. Component of the Integrator complex, composed of core subunits INTS1, INTS2, INTS3, INTS4, INTS5, INTS6, INTS7, INTS8, INTS9/RC74, INTS10, INTS11/CPSF3L, INTS12, INTS13, INTS14 and INTS15. The core complex associates with protein phosphatase 2A subunits PPP2CA and PPP2R1A, to form the Integrator-PP2A (INTAC) complex. Dephosphorylated at Ser-127 by the PNUTS-PP1 complex, promoting RNA polymerase II transcription pause-release.

Its subcellular location is the nucleus. Its function is as follows. Component of the integrator complex, a multiprotein complex that terminates RNA polymerase II (Pol II) transcription in the promoter-proximal region of genes. The integrator complex provides a quality checkpoint during transcription elongation by driving premature transcription termination of transcripts that are unfavorably configured for transcriptional elongation: the complex terminates transcription by (1) catalyzing dephosphorylation of the C-terminal domain (CTD) of Pol II subunit POLR2A/RPB1 and SUPT5H/SPT5, (2) degrading the exiting nascent RNA transcript via endonuclease activity and (3) promoting the release of Pol II from bound DNA. The integrator complex is also involved in terminating the synthesis of non-coding Pol II transcripts, such as enhancer RNAs (eRNAs), small nuclear RNAs (snRNAs), telomerase RNAs and long non-coding RNAs (lncRNAs). Mediates recruitment of cytoplasmic dynein to the nuclear envelope, probably as component of the integrator complex. The sequence is that of Integrator complex subunit 12 (Ints12) from Mus musculus (Mouse).